We begin with the raw amino-acid sequence, 386 residues long: Na(+)/H(+) antiporter NhaA (386 aa).

The next 10 helical transmembrane spans lie at 10–30 (EFSI…NVAP), 45–65 (LSFH…IAAV), 84–104 (LNPL…YLAL), 116–136 (GWGI…RLIF), 142–162 (VIAF…VIIA), 169–189 (VLPV…IAFI), 261–281 (IIVD…GFSA), 287–307 (WLVF…FALL), 323–343 (HLLV…FVAG), and 358–378 (GAIL…LLGI).

Belongs to the NhaA Na(+)/H(+) (TC 2.A.33) antiporter family.

It is found in the cell inner membrane. It carries out the reaction Na(+)(in) + 2 H(+)(out) = Na(+)(out) + 2 H(+)(in). Its function is as follows. Na(+)/H(+) antiporter that extrudes sodium in exchange for external protons. In Geotalea uraniireducens (strain Rf4) (Geobacter uraniireducens), this protein is Na(+)/H(+) antiporter NhaA.